The following is a 446-amino-acid chain: UDP-N-acetylmuramoylalanine--D-glutamate ligase (446 aa).

118 to 124 contributes to the ATP binding site; it reads GSNGKST.

The protein belongs to the MurCDEF family.

Its subcellular location is the cytoplasm. The catalysed reaction is UDP-N-acetyl-alpha-D-muramoyl-L-alanine + D-glutamate + ATP = UDP-N-acetyl-alpha-D-muramoyl-L-alanyl-D-glutamate + ADP + phosphate + H(+). Its pathway is cell wall biogenesis; peptidoglycan biosynthesis. Cell wall formation. Catalyzes the addition of glutamate to the nucleotide precursor UDP-N-acetylmuramoyl-L-alanine (UMA). The polypeptide is UDP-N-acetylmuramoylalanine--D-glutamate ligase (Pseudoalteromonas translucida (strain TAC 125)).